We begin with the raw amino-acid sequence, 520 residues long: Peptide chain release factor 3 (520 aa).

Positions 8–277 constitute a tr-type G domain; sequence ESRKTFAIIS…HAPMPNARQT (270 aa). GTP-binding positions include 17 to 24, 85 to 89, and 139 to 142; these read SHPDAGKT, DTPGH, and NKLD.

This sequence belongs to the TRAFAC class translation factor GTPase superfamily. Classic translation factor GTPase family. PrfC subfamily.

The protein localises to the cytoplasm. In terms of biological role, increases the formation of ribosomal termination complexes and stimulates activities of RF-1 and RF-2. It binds guanine nucleotides and has strong preference for UGA stop codons. It may interact directly with the ribosome. The stimulation of RF-1 and RF-2 is significantly reduced by GTP and GDP, but not by GMP. The chain is Peptide chain release factor 3 from Staphylococcus haemolyticus (strain JCSC1435).